Reading from the N-terminus, the 1587-residue chain is DNA topoisomerase 2 (1587 aa).

Acidic residues predominate over residues 1-15; it reads MSDADPFDMSDDDDN. Positions 1–47 are disordered; sequence MSDADPFDMSDDDDNSVLSHTPPKKQKKAPTTKKGGSKPLADVENES. Basic residues predominate over residues 22–31; sequence PPKKQKKAPT. ATP contacts are provided by residues Asn-126, Asn-155, 183–185, and 196–203; these read SSN and GRNGFGAK. Interaction with DNA stretches follow at residues 381–383 and 381–386; these read KKK and KKKNKN. ATP is bound at residue 415-417; sequence QTK. A disordered region spans residues 461-485; the sequence is MLKKTDGGRRSRMNNPKLTDANKAG. The region spanning 492-606 is the Toprim domain; sequence CTLILTEGDS…SLLKIPEFLI (115 aa). Mg(2+) is bound by residues Glu-498, Asp-575, and Asp-577. A Topo IIA-type catalytic domain is found at 743–1190; the sequence is IPSVVDGLKP…SKEDIWKRDL (448 aa). Tyr-833 (O-(5'-phospho-DNA)-tyrosine intermediate) is an active-site residue. Positions 1016–1025 are interaction with DNA; sequence KLSKTMTTTN. The segment at 1204-1587 is disordered; sequence EARRQRKVAN…PRPRRPRRRS (384 aa). Low complexity predominate over residues 1271–1280; the sequence is LSFLGKSSAK. Residues 1308–1320 are compositionally biased toward basic and acidic residues; that stretch reads PKSEPKADPKPKD. Over residues 1321 to 1334 the composition is skewed to acidic residues; the sequence is EDEDIVMEDSDIEE. The segment covering 1348–1364 has biased composition (basic and acidic residues); the sequence is VKPESEDGQAKIAEAPK. Residues 1365-1375 are compositionally biased toward basic residues; it reads RGRAAAKPKPK. Composition is skewed to acidic residues over residues 1379–1391 and 1419–1430; these read EDEE…DDFM and SDSDSDNGDDLL. Composition is skewed to polar residues over residues 1441-1451 and 1466-1475; these read GSTNGASTSDS and GLKTTASKAS. Residues 1512–1521 show a composition bias toward acidic residues; the sequence is DNEPEDDDDE. The segment covering 1524–1542 has biased composition (low complexity); it reads KPAAKGKAAAKGKSTAAAA. The span at 1558 to 1568 shows a compositional bias: pro residues; the sequence is PKPPPRLPCPL. Residues 1571–1587 are compositionally biased toward basic residues; it reads RRTHRSNPRPRRPRRRS.

The protein belongs to the type II topoisomerase family. Homodimer. It depends on Mg(2+) as a cofactor. Requires Mn(2+) as cofactor. The cofactor is Ca(2+).

It is found in the nucleus. It carries out the reaction ATP-dependent breakage, passage and rejoining of double-stranded DNA.. Functionally, control of topological states of DNA by transient breakage and subsequent rejoining of DNA strands. Topoisomerase II makes double-strand breaks. This chain is DNA topoisomerase 2 (TOP2), found in Penicillium chrysogenum (Penicillium notatum).